Reading from the N-terminus, the 272-residue chain is Petrobactin import ATP-binding protein FpuC (272 aa).

Positions 2 to 238 constitute an ABC transporter domain; sequence ISVNKVFYAH…EMFQHIFGIE (237 aa). 34–41 lines the ATP pocket; that stretch reads GPNGSGKS.

It belongs to the ABC transporter superfamily. As to quaternary structure, the complex is composed of two ATP-binding proteins (FpuC), two transmembrane proteins (FpuB) and a solute-binding protein (FpuA).

It is found in the cell membrane. The catalysed reaction is a Fe(III)-siderophore(out) + ATP + H2O = a Fe(III)-siderophore(in) + ADP + phosphate + H(+). Functionally, part of an ABC transporter complex involved in ferric-petrobactin uptake. Probably responsible for energy coupling to the transport system. In Bacillus anthracis, this protein is Petrobactin import ATP-binding protein FpuC.